The chain runs to 420 residues: Methionine aminopeptidase 2 (420 aa).

Positions 1–48 (MSDAIAKDAVNTSSEKEPVSATPELKTSGSPDAAVSSGDKKKKKKKKK) are disordered. Residue histidine 172 participates in substrate binding. Residues aspartate 192, aspartate 203, and histidine 272 each coordinate a divalent metal cation. A substrate-binding site is contributed by histidine 280. 2 residues coordinate a divalent metal cation: glutamate 305 and glutamate 401.

It belongs to the peptidase M24A family. Methionine aminopeptidase eukaryotic type 2 subfamily. Co(2+) is required as a cofactor. Zn(2+) serves as cofactor. Requires Mn(2+) as cofactor. It depends on Fe(2+) as a cofactor.

Its subcellular location is the cytoplasm. The enzyme catalyses Release of N-terminal amino acids, preferentially methionine, from peptides and arylamides.. Its function is as follows. Cotranslationally removes the N-terminal methionine from nascent proteins. The N-terminal methionine is often cleaved when the second residue in the primary sequence is small and uncharged (Met-Ala-, Cys, Gly, Pro, Ser, Thr, or Val). The polypeptide is Methionine aminopeptidase 2 (Lachancea thermotolerans (strain ATCC 56472 / CBS 6340 / NRRL Y-8284) (Yeast)).